A 236-amino-acid polypeptide reads, in one-letter code: MTKKEMLYEGKGKKLFKTDDENLLISEFKDDLTAFNAEKRGNESGKGALNCKISTEIFHLLEKNGIKTHLVEIISDTEQVVKKCKIVPIEVIVRNVATGSLTKRLGIKDGTVLPFALVEFCLKDDALGDPFINDEHCLILNLVQNEAQISEIKNMARKINSILTPFFDNKNLRLIDFKIELGLTKDNELVLADEISPDSCRFWDKFSNEKLDKDRFRQDLGNVKMAYEEVLKRILN.

This sequence belongs to the SAICAR synthetase family.

It carries out the reaction 5-amino-1-(5-phospho-D-ribosyl)imidazole-4-carboxylate + L-aspartate + ATP = (2S)-2-[5-amino-1-(5-phospho-beta-D-ribosyl)imidazole-4-carboxamido]succinate + ADP + phosphate + 2 H(+). It participates in purine metabolism; IMP biosynthesis via de novo pathway; 5-amino-1-(5-phospho-D-ribosyl)imidazole-4-carboxamide from 5-amino-1-(5-phospho-D-ribosyl)imidazole-4-carboxylate: step 1/2. The sequence is that of Phosphoribosylaminoimidazole-succinocarboxamide synthase from Campylobacter jejuni subsp. jejuni serotype O:2 (strain ATCC 700819 / NCTC 11168).